We begin with the raw amino-acid sequence, 615 residues long: Extracellular metalloproteinase 1 (615 aa).

The signal sequence occupies residues 1–8 (SLPLHVLA). Positions 9-235 (HPQPSTSTSL…VHNVVDYVAH (227 aa)) are excised as a propeptide. Asparagine 276 is a glycosylation site (N-linked (GlcNAc...) asparagine). Histidine 419 serves as a coordination point for Zn(2+). Glutamate 420 is a catalytic residue. Histidine 423 serves as a coordination point for Zn(2+). N-linked (GlcNAc...) asparagine glycans are attached at residues asparagine 464, asparagine 583, and asparagine 612.

Belongs to the peptidase M36 family. Requires Zn(2+) as cofactor.

It is found in the secreted. Secreted metalloproteinase probably acting as a virulence factor. In Trichophyton equinum (Horse ringworm fungus), this protein is Extracellular metalloproteinase 1 (MEP1).